The following is a 145-amino-acid chain: D-aminoacyl-tRNA deacylase (145 aa).

The Gly-cisPro motif, important for rejection of L-amino acids signature appears at 137–138 (GP).

It belongs to the DTD family. In terms of assembly, homodimer.

The protein resides in the cytoplasm. It carries out the reaction glycyl-tRNA(Ala) + H2O = tRNA(Ala) + glycine + H(+). The catalysed reaction is a D-aminoacyl-tRNA + H2O = a tRNA + a D-alpha-amino acid + H(+). Its function is as follows. An aminoacyl-tRNA editing enzyme that deacylates mischarged D-aminoacyl-tRNAs. Also deacylates mischarged glycyl-tRNA(Ala), protecting cells against glycine mischarging by AlaRS. Acts via tRNA-based rather than protein-based catalysis; rejects L-amino acids rather than detecting D-amino acids in the active site. By recycling D-aminoacyl-tRNA to D-amino acids and free tRNA molecules, this enzyme counteracts the toxicity associated with the formation of D-aminoacyl-tRNA entities in vivo and helps enforce protein L-homochirality. This is D-aminoacyl-tRNA deacylase from Shewanella denitrificans (strain OS217 / ATCC BAA-1090 / DSM 15013).